Here is a 469-residue protein sequence, read N- to C-terminus: Tetratricopeptide repeat protein 38 (469 aa).

The residue at position 2 (Ala-2) is an N-acetylalanine. Ser-5 is subject to Phosphoserine. TPR repeat units lie at residues 108 to 141 (REQLHVSAVETFAKGNFPKACELWEQILQDHPTD), 180 to 213 (SYVKGIYSFGLMETNFYDQAEKLAKEALSINPTD), and 252 to 285 (CHNYWHWALYLIEKGEYEAALTIYDTHILPSLQA).

The protein belongs to the TTC38 family.

This is Tetratricopeptide repeat protein 38 (TTC38) from Pongo abelii (Sumatran orangutan).